Here is a 578-residue protein sequence, read N- to C-terminus: Signal peptide peptidase-like 2B (578 aa).

A signal peptide spans 1 to 19 (MAAARLAAALLLLAAQVAC). Topologically, residues 20-168 (EFGVLRVVSQ…APSEPVMDYN (149 aa)) are lumenal. Residues 61-145 (LRDLSTTQLC…LLSHRDLQDI (85 aa)) enclose the PA domain. N-linked (GlcNAc...) asparagine glycans are attached at residues Asn-91 and Asn-123. A helical transmembrane segment spans residues 169–189 (MVIIFVMAVGTVAIGGYWAGS). At 190–216 (HDVKKYMKHKRDDGPEKQEDEAVDVTP) the chain is on the cytoplasmic side. Residues 217-237 (VMICVFVVMCCFMLVLLYYFY) form a helical membrane-spanning segment. The Lumenal segment spans residues 238 to 239 (DR). Residues 240 to 260 (LVYVIIGIFCLASSTGLYSCL) traverse the membrane as a helical segment. Topologically, residues 261–286 (APFVRKLPFCTCRVPDNNLPYFHKRP) are cytoplasmic. Residues 287–307 (QARMLLLALFCVTVSVVWGIF) form a helical membrane-spanning segment. The Lumenal portion of the chain corresponds to 308–312 (RNEDQ). The helical transmembrane segment at 313–333 (WAWVLQDTLGIAFCLYMLKTI) threads the bilayer. The Cytoplasmic segment spans residues 334–341 (RLPTFKAC). Residues 342-362 (TLLLLVLFIYDIFFVFITPFL) form a helical membrane-spanning segment. Asp-352 is a catalytic residue. Residues 363–405 (TKSGNSIMVEVATGPSNSSTHEKLPMVLKVPRLNTSPLSLCDR) are Lumenal-facing. The helical transmembrane segment at 406-426 (PFSLLGFGDILVPGLLVAYCH) threads the bilayer. The active site involves Asp-414. Residues 427–438 (RFDIQVQSSRIY) are Cytoplasmic-facing. Residues 439-459 (FVACTIAYGLGLLVTFVALVL) form a helical membrane-spanning segment. Topologically, residues 460-463 (MQRG) are lumenal. The helical transmembrane segment at 464-484 (QPALLYLVPCTLLTSCTVALW) threads the bilayer. The PAL signature appears at 465-467 (PAL). The Cytoplasmic segment spans residues 485–578 (RRELGAFWTG…IPVVKPETSA (94 aa)). Residues 502–578 (PQTPWAATQG…IPVVKPETSA (77 aa)) are disordered. Low complexity predominate over residues 520–529 (SSLSEQPPSE).

This sequence belongs to the peptidase A22B family. Monomer. Homodimer. Interacts with ITM2B and TNF. In terms of processing, glycosylated.

It localises to the cell membrane. The protein resides in the golgi apparatus membrane. The protein localises to the lysosome membrane. It is found in the endosome membrane. Its subcellular location is the membrane. In terms of biological role, intramembrane-cleaving aspartic protease (I-CLiP) that cleaves type II membrane signal peptides in the hydrophobic plane of the membrane. Functions in ITM2B and TNF processing. Catalyzes the intramembrane cleavage of the anchored fragment of shed TNF-alpha (TNF), which promotes the release of the intracellular domain (ICD) for signaling to the nucleus. May play a role in the regulation of innate and adaptive immunity. The chain is Signal peptide peptidase-like 2B from Mus musculus (Mouse).